A 287-amino-acid chain; its full sequence is Probable endonuclease LCL3 (287 aa).

The disordered stretch occupies residues 1 to 40; that stretch reads MPWPFGPSGSSEAPPPQKPRDDKVEGREPAKSWNSLLPKP. Residues 18–30 show a composition bias toward basic and acidic residues; sequence KPRDDKVEGREPA. Residues 50 to 67 form a helical membrane-spanning segment; it reads WAPVFLTAVGSLAAFMFY. Positions 88-246 constitute a TNase-like domain; it reads RSLLGRVTSV…KAKKLGLWSI (159 aa). The active site involves R137. D142 serves as a coordination point for Ca(2+). Catalysis depends on residues E145 and R185. Basic and acidic residues predominate over residues 254–272; it reads PRDFKNRTQGNEKSERDVE. Residues 254 to 278 form a disordered region; that stretch reads PRDFKNRTQGNEKSERDVEGSTVQK.

It belongs to the LCL3 family.

It is found in the mitochondrion. Its subcellular location is the membrane. This Verticillium alfalfae (strain VaMs.102 / ATCC MYA-4576 / FGSC 10136) (Verticillium wilt of alfalfa) protein is Probable endonuclease LCL3 (LCL3).